The sequence spans 482 residues: Putative fatty acid desaturase 2-like protein FADS2B (482 aa).

The segment at 1–31 (MKFEEKCGDNGSIVGRNQSYPGEKHQPKGKP) is disordered. The Cytoplasmic segment spans residues 1–167 (MKFEEKCGDN…EAMNMFHANL (167 aa)). The 77-residue stretch at 56–132 (LSMYTWLEIQ…LKPLLIGELA (77 aa)) folds into the Cytochrome b5 heme-binding domain. Positions 90 and 113 each coordinate heme. The chain crosses the membrane as a helical span at residues 168-188 (GFFFLHFVQILILEVLAWLIV). Topologically, residues 189–190 (YH) are lumenal. A helical membrane pass occupies residues 191–211 (FGSGWPVTMFISFLLTISQAS). At 212–305 (SSFLQHDAGH…YEEQHLYFYK (94 aa)) the chain is on the cytoplasmic side. The short motif at 217–221 (HDAGH) is the Histidine box-1 element. Positions 254–258 (HFEQH) match the Histidine box-2 motif. The helical transmembrane segment at 306–326 (VWLPLFMPVYLKLPSMQAMYL) threads the bilayer. The Lumenal segment spans residues 327-343 (QRYWVCFSLQDITWVSS). Residues 344 to 364 (FYIYFITFGLYYGIFGTMLLI) form a helical membrane-spanning segment. The Cytoplasmic portion of the chain corresponds to 365–482 (YLVKFLESPW…AALWADAYYE (118 aa)). The Histidine box-3 signature appears at 421 to 425 (QIEHH).

Belongs to the fatty acid desaturase type 1 family.

Its subcellular location is the endoplasmic reticulum membrane. Its pathway is lipid metabolism; polyunsaturated fatty acid biosynthesis. This Homo sapiens (Human) protein is Putative fatty acid desaturase 2-like protein FADS2B.